Reading from the N-terminus, the 599-residue chain is Elongation factor 4 (599 aa).

One can recognise a tr-type G domain in the interval 5–187 (AHIRNFSIVA…AIVKHLPAPK (183 aa)). GTP contacts are provided by residues 17 to 22 (DHGKST) and 134 to 137 (NKID).

Belongs to the TRAFAC class translation factor GTPase superfamily. Classic translation factor GTPase family. LepA subfamily.

Its subcellular location is the cell inner membrane. It catalyses the reaction GTP + H2O = GDP + phosphate + H(+). In terms of biological role, required for accurate and efficient protein synthesis under certain stress conditions. May act as a fidelity factor of the translation reaction, by catalyzing a one-codon backward translocation of tRNAs on improperly translocated ribosomes. Back-translocation proceeds from a post-translocation (POST) complex to a pre-translocation (PRE) complex, thus giving elongation factor G a second chance to translocate the tRNAs correctly. Binds to ribosomes in a GTP-dependent manner. The protein is Elongation factor 4 of Ruegeria pomeroyi (strain ATCC 700808 / DSM 15171 / DSS-3) (Silicibacter pomeroyi).